We begin with the raw amino-acid sequence, 709 residues long: Polyribonucleotide nucleotidyltransferase (709 aa).

Mg(2+) is bound by residues aspartate 489 and aspartate 495. The KH domain occupies 556-615 (PKIDMIKIDVDKIKVVIGKGGETIDKIIAETGVKIDIDEEGNVSIFSSDQAAIDRTKDII). Residues 625–693 (GEVYHAKVVR…DKGRVDASMK (69 aa)) enclose the S1 motif domain.

Belongs to the polyribonucleotide nucleotidyltransferase family. The cofactor is Mg(2+).

It localises to the cytoplasm. It catalyses the reaction RNA(n+1) + phosphate = RNA(n) + a ribonucleoside 5'-diphosphate. In terms of biological role, involved in mRNA degradation. Catalyzes the phosphorolysis of single-stranded polyribonucleotides processively in the 3'- to 5'-direction. In Streptococcus agalactiae serotype Ia (strain ATCC 27591 / A909 / CDC SS700), this protein is Polyribonucleotide nucleotidyltransferase.